Here is a 374-residue protein sequence, read N- to C-terminus: Bifunctional enzyme IspD/IspF (374 aa).

The interval 1–213 (MLDVTLIVLC…PCLKAPSNNF (213 aa)) is 2-C-methyl-D-erythritol 4-phosphate cytidylyltransferase. The segment at 214–374 (FTGTGFDIHA…TLKYYNWKKR (161 aa)) is 2-C-methyl-D-erythritol 2,4-cyclodiphosphate synthase. Residues Asp-220 and His-222 each contribute to the a divalent metal cation site. Residues 220–222 (DIH) and 246–247 (HS) each bind 4-CDP-2-C-methyl-D-erythritol 2-phosphate. His-254 is a binding site for a divalent metal cation. 4-CDP-2-C-methyl-D-erythritol 2-phosphate-binding positions include 268 to 270 (DIG), 273 to 277 (FPDTD), 344 to 347 (TTAE), Phe-351, and Arg-354.

It in the N-terminal section; belongs to the IspD/TarI cytidylyltransferase family. IspD subfamily. This sequence in the C-terminal section; belongs to the IspF family. It depends on a divalent metal cation as a cofactor.

The enzyme catalyses 2-C-methyl-D-erythritol 4-phosphate + CTP + H(+) = 4-CDP-2-C-methyl-D-erythritol + diphosphate. It carries out the reaction 4-CDP-2-C-methyl-D-erythritol 2-phosphate = 2-C-methyl-D-erythritol 2,4-cyclic diphosphate + CMP. The protein operates within isoprenoid biosynthesis; isopentenyl diphosphate biosynthesis via DXP pathway; isopentenyl diphosphate from 1-deoxy-D-xylulose 5-phosphate: step 2/6. It participates in isoprenoid biosynthesis; isopentenyl diphosphate biosynthesis via DXP pathway; isopentenyl diphosphate from 1-deoxy-D-xylulose 5-phosphate: step 4/6. Bifunctional enzyme that catalyzes the formation of 4-diphosphocytidyl-2-C-methyl-D-erythritol from CTP and 2-C-methyl-D-erythritol 4-phosphate (MEP) (IspD), and catalyzes the conversion of 4-diphosphocytidyl-2-C-methyl-D-erythritol 2-phosphate (CDP-ME2P) to 2-C-methyl-D-erythritol 2,4-cyclodiphosphate (ME-CPP) with a corresponding release of cytidine 5-monophosphate (CMP) (IspF). This chain is Bifunctional enzyme IspD/IspF, found in Aliarcobacter butzleri (strain RM4018) (Arcobacter butzleri).